Here is a 274-residue protein sequence, read N- to C-terminus: Diaminopimelate epimerase (274 aa).

Substrate is bound by residues N11, Q44, and N64. The active-site Proton donor is C73. Substrate contacts are provided by residues 74–75, N157, N190, and 208–209; these read GN and ER. C217 serves as the catalytic Proton acceptor. Residue 218 to 219 coordinates substrate; the sequence is GS.

It belongs to the diaminopimelate epimerase family. As to quaternary structure, homodimer.

It is found in the cytoplasm. It carries out the reaction (2S,6S)-2,6-diaminopimelate = meso-2,6-diaminopimelate. It participates in amino-acid biosynthesis; L-lysine biosynthesis via DAP pathway; DL-2,6-diaminopimelate from LL-2,6-diaminopimelate: step 1/1. In terms of biological role, catalyzes the stereoinversion of LL-2,6-diaminopimelate (L,L-DAP) to meso-diaminopimelate (meso-DAP), a precursor of L-lysine and an essential component of the bacterial peptidoglycan. This chain is Diaminopimelate epimerase, found in Photorhabdus laumondii subsp. laumondii (strain DSM 15139 / CIP 105565 / TT01) (Photorhabdus luminescens subsp. laumondii).